The chain runs to 866 residues: Thiamine diphosphate dependent-3-acetyloctanal synthase PigD (866 aa).

A disordered region spans residues Lys-826–Ser-866. The segment covering Trp-828–Ala-845 has biased composition (basic and acidic residues). The span at Pro-849–Ser-866 shows a compositional bias: polar residues.

The protein belongs to the TPP enzyme family. Thiamine diphosphate serves as cofactor.

The enzyme catalyses (2E)-octenal + pyruvate + H(+) = (S)-3-acetyloctanal + CO2. The protein operates within antibiotic biosynthesis; prodigiosin biosynthesis. Its function is as follows. Involved in the biosynthesis of 2-methyl-3-n-amyl-pyrrole (MAP), one of the terminal products involved in the biosynthesis of the red antibiotic prodigiosin (Pig). Catalyzes the decarboxylation of pyruvate, followed by the modification of the resulting two-carbon fragment acetaldehyde at the C3 position of the 2-octenal (1,2-addition of acetaldehyde) giving 3-acetyloctanal. The polypeptide is Thiamine diphosphate dependent-3-acetyloctanal synthase PigD (Serratia sp. (strain ATCC 39006) (Prodigiosinella confusarubida)).